Here is a 216-residue protein sequence, read N- to C-terminus: Regulator of G-protein signaling 19 (216 aa).

The segment covering 1–19 has biased composition (basic and acidic residues); sequence MPTPHEAEKQHTGPEEADR. Residues 1–30 form a disordered region; the sequence is MPTPHEAEKQHTGPEEADRPPSMSSHDAAP. Residues Ser24 and Ser97 each carry the phosphoserine modification. One can recognise an RGS domain in the interval 90–206; sequence SFDKLMHSPT…LTSPTYRSLL (117 aa). At Ser151 the chain carries Phosphoserine; by MAPK1 and MAPK3. Residues 207-216 form an interaction with GIPC region; that stretch reads LQGAPQSSEA.

As to quaternary structure, interacts with GIPC PDZ domain. Interacts with GNAO1. In terms of processing, fatty acylated. Heavily palmitoylated in the cysteine string motif. Phosphorylated, mainly on serine residues.

It is found in the membrane. Its function is as follows. Inhibits signal transduction by increasing the GTPase activity of G protein alpha subunits thereby driving them into their inactive GDP-bound form. Binds to G-alpha subfamily 1 members, with the order G(i)a3 &gt; G(i)a1 &gt; G(o)a &gt;&gt; G(z)a/G(i)a2. Activity on G(z)-alpha is inhibited by phosphorylation and palmitoylation of the G-protein. The protein is Regulator of G-protein signaling 19 (Rgs19) of Mus musculus (Mouse).